A 536-amino-acid polypeptide reads, in one-letter code: Ribulokinase (536 aa).

It belongs to the ribulokinase family.

The enzyme catalyses D-ribulose + ATP = D-ribulose 5-phosphate + ADP + H(+). The catalysed reaction is L-ribulose + ATP = L-ribulose 5-phosphate + ADP + H(+). Its pathway is carbohydrate degradation; L-arabinose degradation via L-ribulose; D-xylulose 5-phosphate from L-arabinose (bacterial route): step 2/3. The chain is Ribulokinase from Staphylococcus epidermidis (strain ATCC 35984 / DSM 28319 / BCRC 17069 / CCUG 31568 / BM 3577 / RP62A).